The following is a 338-amino-acid chain: tRNA-cytidine(32) 2-sulfurtransferase (338 aa).

Residues 86–91 (SGGKDS) carry the PP-loop motif motif. [4Fe-4S] cluster-binding residues include C161, C164, and C252.

This sequence belongs to the TtcA family. As to quaternary structure, homodimer. Mg(2+) is required as a cofactor. The cofactor is [4Fe-4S] cluster.

The protein localises to the cytoplasm. It carries out the reaction cytidine(32) in tRNA + S-sulfanyl-L-cysteinyl-[cysteine desulfurase] + AH2 + ATP = 2-thiocytidine(32) in tRNA + L-cysteinyl-[cysteine desulfurase] + A + AMP + diphosphate + H(+). It participates in tRNA modification. In terms of biological role, catalyzes the ATP-dependent 2-thiolation of cytidine in position 32 of tRNA, to form 2-thiocytidine (s(2)C32). The sulfur atoms are provided by the cysteine/cysteine desulfurase (IscS) system. The protein is tRNA-cytidine(32) 2-sulfurtransferase of Albidiferax ferrireducens (strain ATCC BAA-621 / DSM 15236 / T118) (Rhodoferax ferrireducens).